The primary structure comprises 424 residues: Gamma-glutamyl phosphate reductase (424 aa).

This sequence belongs to the gamma-glutamyl phosphate reductase family.

The protein resides in the cytoplasm. It catalyses the reaction L-glutamate 5-semialdehyde + phosphate + NADP(+) = L-glutamyl 5-phosphate + NADPH + H(+). Its pathway is amino-acid biosynthesis; L-proline biosynthesis; L-glutamate 5-semialdehyde from L-glutamate: step 2/2. Its function is as follows. Catalyzes the NADPH-dependent reduction of L-glutamate 5-phosphate into L-glutamate 5-semialdehyde and phosphate. The product spontaneously undergoes cyclization to form 1-pyrroline-5-carboxylate. This chain is Gamma-glutamyl phosphate reductase, found in Halorhodospira halophila (strain DSM 244 / SL1) (Ectothiorhodospira halophila (strain DSM 244 / SL1)).